Consider the following 454-residue polypeptide: Photosystem II CP47 reaction center protein (454 aa).

A run of 6 helical transmembrane segments spans residues 6–26, 47–61, 86–102, 149–164, 183–198, and 403–418; these read MFVLPFMTRLGVTNSWGGWTI, IILSGLLFLAAIWHW, GIHLFLSGVLCFGFGAF, IAAGIVGILAGLFHLS, VLSSSIAAVFWAAFVV, and SFALLFFFGHIWHGAR.

The protein belongs to the PsbB/PsbC family. PsbB subfamily. PSII is composed of 1 copy each of membrane proteins PsbA, PsbB, PsbC, PsbD, PsbE, PsbF, PsbH, PsbI, PsbJ, PsbK, PsbL, PsbM, PsbT, PsbX, PsbY, PsbZ, Psb30/Ycf12, at least 3 peripheral proteins of the oxygen-evolving complex and a large number of cofactors. It forms dimeric complexes. Requires Binds multiple chlorophylls. PSII binds additional chlorophylls, carotenoids and specific lipids. as cofactor.

It localises to the plastid. The protein localises to the chloroplast thylakoid membrane. One of the components of the core complex of photosystem II (PSII). It binds chlorophyll and helps catalyze the primary light-induced photochemical processes of PSII. PSII is a light-driven water:plastoquinone oxidoreductase, using light energy to abstract electrons from H(2)O, generating O(2) and a proton gradient subsequently used for ATP formation. In Ostreococcus tauri, this protein is Photosystem II CP47 reaction center protein.